The sequence spans 807 residues: Glycerol-3-phosphate acyltransferase (807 aa).

The HXXXXD motif signature appears at 308 to 313 (CHRSHM).

The protein belongs to the GPAT/DAPAT family.

Its subcellular location is the cell inner membrane. It catalyses the reaction sn-glycerol 3-phosphate + an acyl-CoA = a 1-acyl-sn-glycero-3-phosphate + CoA. It participates in phospholipid metabolism; CDP-diacylglycerol biosynthesis; CDP-diacylglycerol from sn-glycerol 3-phosphate: step 1/3. The chain is Glycerol-3-phosphate acyltransferase from Shewanella baltica (strain OS195).